A 655-amino-acid polypeptide reads, in one-letter code: p-hydroxybenzoic acid efflux pump subunit AaeB (655 aa).

A run of 11 helical transmembrane segments spans residues 13–33, 38–58, 69–89, 93–113, 121–141, 152–172, 370–390, 407–427, 431–451, 459–479, and 482–502; these read FAVK…HFQL, WAVL…GGEP, LRII…ISMI, LLMI…SSLV, WGLS…EPLL, EIVI…PRSI, LFWL…IAVV, FIYG…VIIP, QSML…GIEV, MGAL…TFHF, and FLDS…VILL.

The protein belongs to the aromatic acid exporter ArAE (TC 2.A.85) family.

It is found in the cell inner membrane. In terms of biological role, forms an efflux pump with AaeA. Could function as a metabolic relief valve, allowing to eliminate certain compounds when they accumulate to high levels in the cell. In Salmonella agona (strain SL483), this protein is p-hydroxybenzoic acid efflux pump subunit AaeB.